The following is a 146-amino-acid chain: Large ribosomal subunit protein uL15 (146 aa).

The segment at 1–64 is disordered; sequence MELNSIKPAA…MPMHRRLPKR (64 aa). The segment covering 30–39 has biased composition (basic residues); that stretch reads TATKGHKGQK.

It belongs to the universal ribosomal protein uL15 family. As to quaternary structure, part of the 50S ribosomal subunit.

In terms of biological role, binds to the 23S rRNA. This Geotalea daltonii (strain DSM 22248 / JCM 15807 / FRC-32) (Geobacter daltonii) protein is Large ribosomal subunit protein uL15.